The chain runs to 421 residues: Gamma-glutamyl phosphate reductase (421 aa).

The protein belongs to the gamma-glutamyl phosphate reductase family.

The protein localises to the cytoplasm. It carries out the reaction L-glutamate 5-semialdehyde + phosphate + NADP(+) = L-glutamyl 5-phosphate + NADPH + H(+). It functions in the pathway amino-acid biosynthesis; L-proline biosynthesis; L-glutamate 5-semialdehyde from L-glutamate: step 2/2. In terms of biological role, catalyzes the NADPH-dependent reduction of L-glutamate 5-phosphate into L-glutamate 5-semialdehyde and phosphate. The product spontaneously undergoes cyclization to form 1-pyrroline-5-carboxylate. This Erythrobacter litoralis (strain HTCC2594) protein is Gamma-glutamyl phosphate reductase.